Here is a 60-residue protein sequence, read N- to C-terminus: LKCNKLIPIAYKTCPEGKNLCYKMMLASKKMVPVKRGCINVCPKNSALVKYVCCSTDRCN.

4 disulfide bridges follow: cysteine 3-cysteine 21, cysteine 14-cysteine 38, cysteine 42-cysteine 53, and cysteine 54-cysteine 59.

It belongs to the three-finger toxin family. Short-chain subfamily. Type IA cytotoxin sub-subfamily. In terms of assembly, monomer in solution; Homodimer and oligomer in the presence of negatively charged lipids forming a pore with a size ranging between 20 and 30 Angstroms. In terms of tissue distribution, expressed by the venom gland.

The protein localises to the secreted. It localises to the target cell membrane. Shows cytolytic activity on many different cells by forming pore in lipid membranes. In vivo, increases heart rate or kills the animal by cardiac arrest. In addition, it binds to heparin with high affinity, interacts with Kv channel-interacting protein 1 (KCNIP1) in a calcium-independent manner, and binds to integrin alpha-V/beta-3 (ITGAV/ITGB3) with moderate affinity. The sequence is that of Cytotoxin 4 from Naja mossambica (Mozambique spitting cobra).